The sequence spans 359 residues: Aflatoxin B1 aldehyde reductase member 2 (359 aa).

Residues 1-38 constitute a mitochondrion transit peptide; sequence MLSAASRVVSRAAVHCALRSPPPEARALAMSRPPPPRV. The residue at position 40 (S40) is a Phosphoserine. D72 is an NADP(+) binding site. Catalysis depends on Y77, which acts as the Proton donor. N6-acetyllysine is present on K128. H141 contributes to the substrate binding site. Residues 171-172, Q197, 226-236, and R250 contribute to the NADP(+) site; these read SN and NPLAGGLLTGK. K236 is subject to N6-succinyllysine. A Phosphoserine modification is found at S255. Residues Y260 and R263 each contribute to the substrate site. Position 318–326 (318–326) interacts with NADP(+); that stretch reads SSLEQLEQN. R359 contacts substrate.

This sequence belongs to the aldo/keto reductase family. Aldo/keto reductase 2 subfamily. In terms of assembly, homodimer. In terms of tissue distribution, detected in brain, liver, small intestine and testis, and at lower levels in heart, prostate, skeletal muscle and spleen. Detected in kidney proximal and distal tubules, endothelial cells lining the Bowman's capsules and some cysts. Detected at low levels in lung and pancreas (at protein level). Widely expressed.

It is found in the mitochondrion. Its subcellular location is the golgi apparatus. It localises to the cytoplasm. The enzyme catalyses 4-hydroxybutanoate + NADP(+) = succinate semialdehyde + NADPH + H(+). Functionally, catalyzes the NADPH-dependent reduction of succinic semialdehyde to gamma-hydroxybutyrate. May have an important role in producing the neuromodulator gamma-hydroxybutyrate (GHB). Has broad substrate specificity. Has NADPH-dependent aldehyde reductase activity towards 2-carboxybenzaldehyde, 2-nitrobenzaldehyde and pyridine-2-aldehyde (in vitro). Can reduce 1,2-naphthoquinone and 9,10-phenanthrenequinone (in vitro). Can reduce the dialdehyde protein-binding form of aflatoxin B1 (AFB1) to the non-binding AFB1 dialcohol. May be involved in protection of liver against the toxic and carcinogenic effects of AFB1, a potent hepatocarcinogen. The polypeptide is Aflatoxin B1 aldehyde reductase member 2 (AKR7A2) (Homo sapiens (Human)).